Reading from the N-terminus, the 222-residue chain is Octanoyltransferase (222 aa).

In terms of domain architecture, BPL/LPL catalytic spans 35 to 214 (GTAPELIWLL…HLDGFLARLD (180 aa)). Substrate-binding positions include 73–80 (RGGRYTYH), 145–147 (AIG), and 158–160 (GFS). Residue Cys-176 is the Acyl-thioester intermediate of the active site.

The protein belongs to the LipB family.

The protein resides in the cytoplasm. It carries out the reaction octanoyl-[ACP] + L-lysyl-[protein] = N(6)-octanoyl-L-lysyl-[protein] + holo-[ACP] + H(+). It functions in the pathway protein modification; protein lipoylation via endogenous pathway; protein N(6)-(lipoyl)lysine from octanoyl-[acyl-carrier-protein]: step 1/2. Its function is as follows. Catalyzes the transfer of endogenously produced octanoic acid from octanoyl-acyl-carrier-protein onto the lipoyl domains of lipoate-dependent enzymes. Lipoyl-ACP can also act as a substrate although octanoyl-ACP is likely to be the physiological substrate. This chain is Octanoyltransferase, found in Novosphingobium aromaticivorans (strain ATCC 700278 / DSM 12444 / CCUG 56034 / CIP 105152 / NBRC 16084 / F199).